A 465-amino-acid polypeptide reads, in one-letter code: 3-isopropylmalate dehydratase large subunit (465 aa).

[4Fe-4S] cluster-binding residues include cysteine 347, cysteine 407, and cysteine 410. The interval 416–443 (DTLRPGERSASTSNRNFEGRQGPGGRTH) is disordered.

Belongs to the aconitase/IPM isomerase family. LeuC type 1 subfamily. In terms of assembly, heterodimer of LeuC and LeuD. [4Fe-4S] cluster serves as cofactor.

The catalysed reaction is (2R,3S)-3-isopropylmalate = (2S)-2-isopropylmalate. It functions in the pathway amino-acid biosynthesis; L-leucine biosynthesis; L-leucine from 3-methyl-2-oxobutanoate: step 2/4. Its function is as follows. Catalyzes the isomerization between 2-isopropylmalate and 3-isopropylmalate, via the formation of 2-isopropylmaleate. This Frankia casuarinae (strain DSM 45818 / CECT 9043 / HFP020203 / CcI3) protein is 3-isopropylmalate dehydratase large subunit.